The primary structure comprises 425 residues: uncharacterized protein (425 aa).

One can recognise an HD domain in the interval 55 to 181; sequence RYAHSLGVYE…DLDTDRMDYL (127 aa).

This is an uncharacterized protein from Mycoplasma genitalium (strain ATCC 33530 / DSM 19775 / NCTC 10195 / G37) (Mycoplasmoides genitalium).